A 317-amino-acid chain; its full sequence is Aspartate carbamoyltransferase catalytic subunit (317 aa).

Positions 66 and 67 each coordinate carbamoyl phosphate. K94 is an L-aspartate binding site. Positions 116, 144, and 147 each coordinate carbamoyl phosphate. 2 residues coordinate L-aspartate: R177 and R231. Carbamoyl phosphate is bound by residues G272 and P273.

The protein belongs to the aspartate/ornithine carbamoyltransferase superfamily. ATCase family. In terms of assembly, heterododecamer (2C3:3R2) of six catalytic PyrB chains organized as two trimers (C3), and six regulatory PyrI chains organized as three dimers (R2).

The catalysed reaction is carbamoyl phosphate + L-aspartate = N-carbamoyl-L-aspartate + phosphate + H(+). It functions in the pathway pyrimidine metabolism; UMP biosynthesis via de novo pathway; (S)-dihydroorotate from bicarbonate: step 2/3. Catalyzes the condensation of carbamoyl phosphate and aspartate to form carbamoyl aspartate and inorganic phosphate, the committed step in the de novo pyrimidine nucleotide biosynthesis pathway. In Rhodopseudomonas palustris (strain BisB5), this protein is Aspartate carbamoyltransferase catalytic subunit.